The sequence spans 206 residues: Small ribosomal subunit protein uS4c (206 aa).

Basic residues-rich tracts occupy residues 1–13 (MSRY…RITR) and 25–34 (QSKKKGRPGQ). The disordered stretch occupies residues 1 to 50 (MSRYRGPKLRITRRLGALPGLTQKQSKKKGRPGQHGKSNEADNSKKTTEY). Residues 37 to 50 (KSNEADNSKKTTEY) are compositionally biased toward basic and acidic residues. An S4 RNA-binding domain is found at 95 to 157 (MRLDTICFTL…ATSKNLVEGN (63 aa)).

Belongs to the universal ribosomal protein uS4 family. Part of the 30S ribosomal subunit. Contacts protein S5. The interaction surface between S4 and S5 is involved in control of translational fidelity.

The protein resides in the plastid. The protein localises to the chloroplast. Its function is as follows. One of the primary rRNA binding proteins, it binds directly to 16S rRNA where it nucleates assembly of the body of the 30S subunit. Functionally, with S5 and S12 plays an important role in translational accuracy. The chain is Small ribosomal subunit protein uS4c (rps4) from Trieres chinensis (Marine centric diatom).